A 353-amino-acid polypeptide reads, in one-letter code: MTAILERRESESLWGRFCNWITSTENRLYIGWFGVLMIPTLLTATSVFIIAFIAAPPVDIDGIREPVSGSLLYGNNIISGAIIPTSAAIGLHFYPIWEAASVDEWLYNGGPYELIVLHFLLGVACYMGREWELSFRLGMRPWIAVAYSAPVAAAAAVFLIYPIGQGSFSDGMPLGISGTFNFMIVFQAEHNILMHPFHMLGVAGVFGGSLFSAMHGSLVTSSLIRETTENESANEGYRFGQEEETYNIVAAHGYFGRLIFQYASFNNSRSLHFFLAAWPVVGIWFTALGISTMAFNLNGFNFNQSVVDSQGRVINTWADIINRANLGMEVMHERNAHNFPLDLAAVEAPSTNG.

An N-acetylthreonine modification is found at threonine 2. Residue threonine 2 is modified to Phosphothreonine. 3 helical membrane-spanning segments follow: residues 29–46, 118–133, and 142–156; these read YIGWFGVLMIPTLLTATS, HFLLGVACYMGREWEL, and WIAVAYSAPVAAAAA. Histidine 118 contributes to the chlorophyll a binding site. Tyrosine 126 serves as a coordination point for pheophytin a. [CaMn4O5] cluster is bound by residues aspartate 170 and glutamate 189. Residues 197 to 218 traverse the membrane as a helical segment; the sequence is FHMLGVAGVFGGSLFSAMHGSL. Chlorophyll a is bound at residue histidine 198. A quinone is bound by residues histidine 215 and 264–265; that span reads SF. Histidine 215 serves as a coordination point for Fe cation. A Fe cation-binding site is contributed by histidine 272. Residues 274 to 288 form a helical membrane-spanning segment; it reads FLAAWPVVGIWFTAL. [CaMn4O5] cluster contacts are provided by histidine 332, glutamate 333, aspartate 342, and alanine 344. A propeptide spanning residues 345–353 is cleaved from the precursor; the sequence is AVEAPSTNG.

Belongs to the reaction center PufL/M/PsbA/D family. PSII is composed of 1 copy each of membrane proteins PsbA, PsbB, PsbC, PsbD, PsbE, PsbF, PsbH, PsbI, PsbJ, PsbK, PsbL, PsbM, PsbT, PsbX, PsbY, PsbZ, Psb30/Ycf12, at least 3 peripheral proteins of the oxygen-evolving complex and a large number of cofactors. It forms dimeric complexes. Requires The D1/D2 heterodimer binds P680, chlorophylls that are the primary electron donor of PSII, and subsequent electron acceptors. It shares a non-heme iron and each subunit binds pheophytin, quinone, additional chlorophylls, carotenoids and lipids. D1 provides most of the ligands for the Mn4-Ca-O5 cluster of the oxygen-evolving complex (OEC). There is also a Cl(-1) ion associated with D1 and D2, which is required for oxygen evolution. The PSII complex binds additional chlorophylls, carotenoids and specific lipids. as cofactor. Post-translationally, tyr-161 forms a radical intermediate that is referred to as redox-active TyrZ, YZ or Y-Z. In terms of processing, C-terminally processed by CTPA; processing is essential to allow assembly of the oxygen-evolving complex and thus photosynthetic growth.

The protein localises to the plastid. The protein resides in the chloroplast thylakoid membrane. The enzyme catalyses 2 a plastoquinone + 4 hnu + 2 H2O = 2 a plastoquinol + O2. In terms of biological role, photosystem II (PSII) is a light-driven water:plastoquinone oxidoreductase that uses light energy to abstract electrons from H(2)O, generating O(2) and a proton gradient subsequently used for ATP formation. It consists of a core antenna complex that captures photons, and an electron transfer chain that converts photonic excitation into a charge separation. The D1/D2 (PsbA/PsbD) reaction center heterodimer binds P680, the primary electron donor of PSII as well as several subsequent electron acceptors. In Panax ginseng (Korean ginseng), this protein is Photosystem II protein D1.